The sequence spans 211 residues: Small ribosomal subunit protein uS3 (211 aa).

Positions 38–106 (LRSFVKKTFH…EVELHIVEVK (69 aa)) constitute a KH type-2 domain.

The protein belongs to the universal ribosomal protein uS3 family. As to quaternary structure, part of the 30S ribosomal subunit. Forms a tight complex with proteins S10 and S14.

Its function is as follows. Binds the lower part of the 30S subunit head. Binds mRNA in the 70S ribosome, positioning it for translation. This chain is Small ribosomal subunit protein uS3, found in Anaplasma phagocytophilum (strain HZ).